The chain runs to 2209 residues: Genome polyprotein (2209 aa).

Glycine 2 is lipidated: N-myristoyl glycine; by host. The Cytoplasmic portion of the chain corresponds to 2-1520; it reads GAQVSSQKVG…NINRAMTILQ (1519 aa). Residues 580 to 600 form an amphipathic alpha-helix region; sequence GLGQMLESMIDNTVRETVGAA. Active-site for protease 2A activity residues include histidine 901 and aspartate 919. Positions 936 and 938 each coordinate Zn(2+). Residue cysteine 990 is the For protease 2A activity of the active site. Residues cysteine 996 and histidine 998 each contribute to the Zn(2+) site. Residues 1128–1200 form a membrane-binding region; it reads GDSWLKKFTE…HQSCPSQEHQ (73 aa). The tract at residues 1128–1266 is oligomerization; the sequence is GDSWLKKFTE…SPGTGKSVAT (139 aa). The interval 1149-1153 is RNA-binding; sequence SNKIS. The 157-residue stretch at 1232-1388 folds into the SF3 helicase domain; the sequence is EHTINNYIQF…NEYSRDGKLN (157 aa). 1256 to 1263 provides a ligand contact to ATP; sequence GSPGTGKS. Cysteine 1396, cysteine 1399, cysteine 1408, and cysteine 1413 together coordinate Zn(2+). Residues 1396 to 1413 form a C4-type zinc finger; the sequence is CKNCHQPANFKRCCPLVC. The tract at residues 1440-1447 is RNA-binding; it reads ERNRRSNI. Residues 1451-1456 form an oligomerization region; the sequence is MEALFQ. The stretch at 1521-1536 is an intramembrane region; the sequence is AVTTFAAVAGVVYVMY. The Cytoplasmic portion of the chain corresponds to 1537–2209; it reads KLFAGHQGAY…TLYRRWLDSF (673 aa). Tyrosine 1546 is subject to O-(5'-phospho-RNA)-tyrosine. Positions 1566-1744 constitute a Peptidase C3 domain; that stretch reads GPGFDYAVAM…FAAALKRSYF (179 aa). Catalysis depends on for protease 3C activity residues histidine 1605, glutamate 1636, and cysteine 1712. A RdRp catalytic domain is found at 1975-2090; the sequence is EKLFAFDYTG…SYPHEVDASL (116 aa). Mg(2+) contacts are provided by aspartate 1981 and aspartate 2076.

The protein belongs to the picornaviruses polyprotein family. In terms of assembly, interacts with capsid protein VP1 and capsid protein VP3 to form heterotrimeric protomers. As to quaternary structure, interacts with capsid protein VP0, and capsid protein VP3 to form heterotrimeric protomers. Interacts with human PVR. Five protomers subsequently associate to form pentamers which serve as building blocks for the capsid. Interacts with capsid protein VP2, capsid protein VP3 and capsid protein VP4 following cleavage of capsid protein VP0. Interacts with capsid protein VP1 and capsid protein VP3 in the mature capsid. In terms of assembly, interacts with capsid protein VP0 and capsid protein VP1 to form heterotrimeric protomers. Five protomers subsequently associate to form pentamers which serve as building blocks for the capsid. Interacts with capsid protein VP4 in the mature capsid. Interacts with protein 2C; this interaction may be important for virion morphogenesis. As to quaternary structure, interacts with capsid protein VP1 and capsid protein VP3. Homodimer. In terms of assembly, homohexamer; forms a hexameric ring structure with 6-fold symmetry characteristic of AAA+ ATPases. Interacts (via N-terminus) with host RTN3 (via reticulon domain); this interaction is important for viral replication. Interacts with capsid protein VP3; this interaction may be important for virion morphogenesis. As to quaternary structure, interacts with protein 3CD. Homodimer. Interacts with host GBF1. Interacts (via GOLD domain) with host ACBD3 (via GOLD domain); this interaction allows the formation of a viral protein 3A/ACBD3 heterotetramer with a 2:2 stoichiometry, which will stimulate the recruitment of host PI4KB in order to synthesize PI4P at the viral RNA replication sites. In terms of assembly, interacts with RNA-directed RNA polymerase. As to quaternary structure, interacts with protein 3AB and with RNA-directed RNA polymerase. Interacts with Viral protein genome-linked and with protein 3CD. Mg(2+) is required as a cofactor. In terms of processing, specific enzymatic cleavages in vivo by the viral proteases yield processing intermediates and the mature proteins. Myristoylation is required for the formation of pentamers during virus assembly. Further assembly of 12 pentamers and a molecule of genomic RNA generates the provirion. Post-translationally, during virion maturation, immature virions are rendered infectious following cleavage of VP0 into VP4 and VP2. This maturation seems to be an autocatalytic event triggered by the presence of RNA in the capsid and it is followed by a conformational change infectious virion. In terms of processing, myristoylation is required during RNA encapsidation and formation of the mature virus particle. VPg is uridylylated by the polymerase into VPg-pUpU. This acts as a nucleotide-peptide primer for the genomic RNA replication.

The protein localises to the virion. It is found in the host cytoplasm. The protein resides in the host cytoplasmic vesicle membrane. Its subcellular location is the host nucleus. It carries out the reaction a ribonucleoside 5'-triphosphate + H2O = a ribonucleoside 5'-diphosphate + phosphate + H(+). The catalysed reaction is Selective cleavage of Tyr-|-Gly bond in the picornavirus polyprotein.. It catalyses the reaction RNA(n) + a ribonucleoside 5'-triphosphate = RNA(n+1) + diphosphate. The enzyme catalyses Selective cleavage of Gln-|-Gly bond in the poliovirus polyprotein. In other picornavirus reactions Glu may be substituted for Gln, and Ser or Thr for Gly.. With respect to regulation, replication or transcription is subject to high level of random mutations by the nucleotide analog ribavirin. Functionally, forms an icosahedral capsid of pseudo T=3 symmetry with capsid proteins VP2 and VP3. The capsid is 300 Angstroms in diameter, composed of 60 copies of each capsid protein and enclosing the viral positive strand RNA genome. Capsid protein VP1 mainly forms the vertices of the capsid. Capsid protein VP1 interacts with host cell receptor PVR to provide virion attachment to target host cells. This attachment induces virion internalization predominantly through clathrin- and caveolin-independent endocytosis in Hela cells and through caveolin-mediated endocytosis in brain microvascular endothelial cells. Tyrosine kinases are probably involved in the entry process. Virus binding to PVR induces increased junctional permeability and rearrangement of junctional proteins. Modulation of endothelial tight junctions, as well as cytolytic infection of endothelial cells themselves, may result in loss of endothelial integrity which may help the virus to reach the CNS. After binding to its receptor, the capsid undergoes conformational changes. Capsid protein VP1 N-terminus (that contains an amphipathic alpha-helix) and capsid protein VP4 are externalized. Together, they shape a pore in the host membrane through which viral genome is translocated to host cell cytoplasm. Forms an icosahedral capsid of pseudo T=3 symmetry with capsid proteins VP2 and VP3. The capsid is 300 Angstroms in diameter, composed of 60 copies of each capsid protein and enclosing the viral positive strand RNA genome. In terms of biological role, lies on the inner surface of the capsid shell. After binding to the host receptor, the capsid undergoes conformational changes. Capsid protein VP4 is released, Capsid protein VP1 N-terminus is externalized, and together, they shape a pore in the host membrane through which the viral genome is translocated into the host cell cytoplasm. Its function is as follows. Component of immature procapsids, which is cleaved into capsid proteins VP4 and VP2 after maturation. Allows the capsid to remain inactive before the maturation step. Functionally, cysteine protease that cleaves viral polyprotein and specific host proteins. It is responsible for the autocatalytic cleavage between the P1 and P2 regions, which is the first cleavage occurring in the polyprotein. Also cleaves the host translation initiation factor EIF4G1, in order to shut down the capped cellular mRNA translation. Inhibits the host nucleus-cytoplasm protein and RNA trafficking by cleaving host members of the nuclear pores including NUP98, NUP62 and NUP153. Counteracts stress granule formation probably by antagonizing its assembly or promoting its dissassembly. Cleaves and inhibits host IFIH1/MDA5, thereby inhibiting the type-I IFN production and the establishment of the antiviral state. Cleaves and inhibits host MAVS, thereby inhibiting the type-I IFN production and the establishment of the antiviral state. Plays an essential role in the virus replication cycle by acting as a viroporin. Creates a pore in the host endoplasmic reticulum and as a consequence releases Ca2+ in the cytoplasm of infected cell. In turn, high levels of cytoplasmic calcium may trigger membrane trafficking and transport of viral ER-associated proteins to viroplasms, sites of viral genome replication. In terms of biological role, induces and associates with structural rearrangements of intracellular membranes. Displays RNA-binding, nucleotide binding and NTPase activities. May play a role in virion morphogenesis and viral RNA encapsidation by interacting with the capsid protein VP3. Its function is as follows. Localizes the viral replication complex to the surface of membranous vesicles. Together with protein 3CD binds the Cis-Active RNA Element (CRE) which is involved in RNA synthesis initiation. Acts as a cofactor to stimulate the activity of 3D polymerase, maybe through a nucleid acid chaperone activity. Functionally, localizes the viral replication complex to the surface of membranous vesicles. It inhibits host cell endoplasmic reticulum-to-Golgi apparatus transport and causes the disassembly of the Golgi complex, possibly through GBF1 interaction. This would result in depletion of MHC, trail receptors and IFN receptors at the host cell surface. Plays an essential role in viral RNA replication by recruiting ACBD3 and PI4KB at the viral replication sites, thereby allowing the formation of the rearranged membranous structures where viral replication takes place. Acts as a primer for viral RNA replication and remains covalently bound to viral genomic RNA. VPg is uridylylated prior to priming replication into VPg-pUpU. The oriI viral genomic sequence may act as a template for this. The VPg-pUpU is then used as primer on the genomic RNA poly(A) by the RNA-dependent RNA polymerase to replicate the viral genome. During genome replication, the VPg-RNA linkage is removed by the host TDP2, thereby accelerating replication. During the late stage of the replication cycle, host TDP2 is excluded from sites of viral RNA synthesis and encapsidation, allowing for the generation of progeny virions. In terms of biological role, involved in the viral replication complex and viral polypeptide maturation. It exhibits protease activity with a specificity and catalytic efficiency that is different from protease 3C. Protein 3CD lacks polymerase activity. Protein 3CD binds to the 5'UTR of the viral genome. Its function is as follows. Major viral protease that mediates proteolytic processing of the polyprotein. Cleaves host EIF5B, contributing to host translation shutoff. Also cleaves host PABPC1, contributing to host translation shutoff. Cleaves host RIGI and thus contributes to the inhibition of type I interferon production. Cleaves host NLRP1, triggers host N-glycine-mediated degradation of the autoinhibitory NLRP1 N-terminal fragment. Inhibits the integrated stress response (ISR) in the infected cell by cleaving host G3BP1. Stress granule formation is thus inhibited, which allows protein synthesis and viral replication. Functionally, replicates the viral genomic RNA on the surface of intracellular membranes. May form linear arrays of subunits that propagate along a strong head-to-tail interaction called interface-I. Covalently attaches UMP to a tyrosine of VPg, which is used to prime RNA synthesis. The positive stranded RNA genome is first replicated at virus induced membranous vesicles, creating a dsRNA genomic replication form. This dsRNA is then used as template to synthesize positive stranded RNA genomes. ss(+)RNA genomes are either translated, replicated or encapsidated. This chain is Genome polyprotein, found in Homo sapiens (Human).